We begin with the raw amino-acid sequence, 346 residues long: Dihydroorotase (346 aa).

2 residues coordinate Zn(2+): histidine 13 and histidine 15. Substrate contacts are provided by residues 15–17 and asparagine 41; that span reads HLR. Lysine 99, histidine 136, and histidine 174 together coordinate Zn(2+). N6-carboxylysine is present on lysine 99. Residue histidine 136 coordinates substrate. Leucine 219 contributes to the substrate binding site. Aspartate 247 serves as a coordination point for Zn(2+). Aspartate 247 is an active-site residue. Substrate contacts are provided by histidine 251 and alanine 263.

Belongs to the metallo-dependent hydrolases superfamily. DHOase family. Class II DHOase subfamily. In terms of assembly, homodimer. Zn(2+) serves as cofactor.

It carries out the reaction (S)-dihydroorotate + H2O = N-carbamoyl-L-aspartate + H(+). The protein operates within pyrimidine metabolism; UMP biosynthesis via de novo pathway; (S)-dihydroorotate from bicarbonate: step 3/3. Functionally, catalyzes the reversible cyclization of carbamoyl aspartate to dihydroorotate. In Rhizobium rhizogenes (strain K84 / ATCC BAA-868) (Agrobacterium radiobacter), this protein is Dihydroorotase.